A 183-amino-acid polypeptide reads, in one-letter code: MEEDVINILKSIGEDPTREGLLNTPKRVKKAYEFLTSGYRADITKIVNGAIFEEPTEGMVLVRDIEMYSLCEHHLLPFYGKAHVAYLPNKKIIGISKIPRIVDVFARRLQVQERLTEQIAYAIQEVLDPQGVAVVIKAKHLCMMMRGVEKQNSELFTSCMLGAFKENMVTRSEFLDLIRTGST.

Residues cysteine 71, histidine 74, and cysteine 142 each contribute to the Zn(2+) site.

Belongs to the GTP cyclohydrolase I family. As to quaternary structure, toroid-shaped homodecamer, composed of two pentamers of five dimers.

The catalysed reaction is GTP + H2O = 7,8-dihydroneopterin 3'-triphosphate + formate + H(+). The protein operates within cofactor biosynthesis; 7,8-dihydroneopterin triphosphate biosynthesis; 7,8-dihydroneopterin triphosphate from GTP: step 1/1. This Leptospira interrogans serogroup Icterohaemorrhagiae serovar copenhageni (strain Fiocruz L1-130) protein is GTP cyclohydrolase 1.